The following is a 36-amino-acid chain: MITFSFPSIFVPLVGLVFPAIAMASLSLHVQKNKII.

A helical membrane pass occupies residues 1 to 21 (MITFSFPSIFVPLVGLVFPAI).

Belongs to the PsaI family.

The protein localises to the plastid. It localises to the chloroplast thylakoid membrane. In terms of biological role, may help in the organization of the PsaL subunit. In Coffea arabica (Arabian coffee), this protein is Photosystem I reaction center subunit VIII.